Here is a 460-residue protein sequence, read N- to C-terminus: Argininosuccinate lyase (460 aa).

This sequence belongs to the lyase 1 family. Argininosuccinate lyase subfamily.

The protein localises to the cytoplasm. It carries out the reaction 2-(N(omega)-L-arginino)succinate = fumarate + L-arginine. It functions in the pathway amino-acid biosynthesis; L-arginine biosynthesis; L-arginine from L-ornithine and carbamoyl phosphate: step 3/3. The sequence is that of Argininosuccinate lyase from Edwardsiella ictaluri (strain 93-146).